A 179-amino-acid chain; its full sequence is Signal peptidase complex subunit 3 (179 aa).

Topologically, residues 1-12 are cytoplasmic; sequence MHTVLTRGNATV. A helical; Signal-anchor for type II membrane protein transmembrane segment spans residues 13 to 33; sequence AYTLSVLACLTFSCFLSTVFL. Residues 34–179 lie on the Lumenal side of the membrane; the sequence is DYRTDANINT…FPADYATSSI (146 aa). Asparagine 73 and asparagine 141 each carry an N-linked (GlcNAc...) asparagine glycan.

The protein belongs to the SPCS3 family. Component of the signal peptidase complex (SPC) composed of a catalytic subunit twr/SEC11 and three accessory subunits Spase12/SPCS1, Spase25/SPCS2 and Spase22-23/SPCS3. The complex induces a local thinning of the ER membrane which is used to measure the length of the signal peptide (SP) h-region of protein substrates. This ensures the selectivity of the complex towards h-regions shorter than 18-20 amino acids.

Its subcellular location is the endoplasmic reticulum membrane. Its function is as follows. Essential component of the signal peptidase complex (SPC) which catalyzes the cleavage of N-terminal signal sequences from nascent proteins as they are translocated into the lumen of the endoplasmic reticulum. Essential for the SPC catalytic activity, possibly by stabilizing and positioning the active center of the complex close to the lumenal surface. Functionally, (Microbial infection) Plays an important role in infection by flaviviruses such as West Nile virus and Dengue virus type 2. The chain is Signal peptidase complex subunit 3 (Spase22-23) from Drosophila melanogaster (Fruit fly).